The chain runs to 780 residues: Heat shock protein 90-5, chloroplastic (780 aa).

Residues methionine 1–lysine 60 constitute a chloroplast transit peptide. ATP-binding positions include glutamate 106, asparagine 110, aspartate 152, methionine 157, serine 172–glycine 173, glutamine 196–phenylalanine 201, threonine 251, and arginine 441. The disordered stretch occupies residues glycine 742–aspartate 780. Residues serine 769 to aspartate 780 show a composition bias toward basic and acidic residues.

The protein belongs to the heat shock protein 90 family. As to quaternary structure, homodimer. Interacts with VIPP1. Interacts with P23-1. In terms of tissue distribution, expressed in roots, cotyledons, young leaves, mature leaves, stems, flowers, petals and siliques.

The protein resides in the plastid. It is found in the chloroplast stroma. Functionally, molecular chaperone required for chloroplast biogenesis. Essential for chloroplast biogenesis and maintenance, and thus for embryogenesis. May be involved in the disassembly of VIPP1 for thylakoid membrane formation and/or maintenance. Cooperates with TIC components and other molecular chaperones to drive transport of preproteins into chloroplasts and functions in the chloroplast stroma to facilitate membrane translocation during protein import into the organelle. This chain is Heat shock protein 90-5, chloroplastic, found in Arabidopsis thaliana (Mouse-ear cress).